The sequence spans 174 residues: Methylated protein MJ0556 (174 aa).

CBS domains are found at residues 28-87 and 91-156; these read MISG…YLNV and MLKN…IIKE.

Methylated at an undetermined residue between Ser-2 and Asp-26.

This chain is Methylated protein MJ0556, found in Methanocaldococcus jannaschii (strain ATCC 43067 / DSM 2661 / JAL-1 / JCM 10045 / NBRC 100440) (Methanococcus jannaschii).